A 283-amino-acid polypeptide reads, in one-letter code: RNase adapter protein RapZ (283 aa).

8–15 contacts ATP; sequence GRSGSGKS. 56 to 59 is a GTP binding site; sequence DVRN. Positions 266–283 are RNA-binding; that stretch reads RARGKNVQSRHRTLEKRK.

The protein belongs to the RapZ-like family. RapZ subfamily. Homotrimer.

In terms of biological role, modulates the synthesis of GlmS, by affecting the processing and stability of the regulatory small RNA GlmZ. When glucosamine-6-phosphate (GlcN6P) concentrations are high in the cell, RapZ binds GlmZ and targets it to cleavage by RNase E. Consequently, GlmZ is inactivated and unable to activate GlmS synthesis. Under low GlcN6P concentrations, RapZ is sequestered and inactivated by an other regulatory small RNA, GlmY, preventing GlmZ degradation and leading to synthesis of GlmS. The polypeptide is RNase adapter protein RapZ (Yersinia enterocolitica serotype O:8 / biotype 1B (strain NCTC 13174 / 8081)).